Here is a 438-residue protein sequence, read N- to C-terminus: sn-glycerol-3-phosphate-binding periplasmic protein UgpB (438 aa).

Positions 1-23 (MKPLHYTASALALGLALMGNAQA) are cleaved as a signal peptide. Residues tyrosine 65, glutamate 89, serine 144, serine 270, glycine 307, tyrosine 346, and arginine 397 each coordinate sn-glycerol 3-phosphate.

The protein belongs to the bacterial solute-binding protein 1 family. As to quaternary structure, the complex is composed of two ATP-binding proteins (UgpC), two transmembrane proteins (UgpA and UgpE) and a solute-binding protein (UgpB).

It is found in the periplasm. Part of the ABC transporter complex UgpBAEC involved in sn-glycerol-3-phosphate (G3P) import. Binds G3P. This Shigella flexneri protein is sn-glycerol-3-phosphate-binding periplasmic protein UgpB (ugpB).